A 328-amino-acid polypeptide reads, in one-letter code: MKGYMEDREHEKSLQAEKEELKEVSVSYGHEVKLSNLFPTRFGHKNYQHTFEGMDHGRHVHAHGNKMQQLADVFFFRDALRPGSVITPTIPPTTSLPAFLPRHVADAIPFSADRFADVLAMFAPASLAMAREIRWALDTCGQRAAALLPGEKAGCATSLESLADLAASLLGTRDVRAFSAADLPTDAATTPARRGRYNVTSVRELSAMAGSGSSSSSEPAPAAVVACHDLTYPYAVFYCHSTKPTAAYAVTLVAATTGDGDGEGEAASPAKMEALAVCHLDTSRWRADNPFFVAHGVKPGEVSVCHFLTKLSIVWVPRHEQGGPRAAA.

The BURP domain maps to 74-318; the sequence is FFFRDALRPG…TKLSIVWVPR (245 aa).

As to expression, expressed in roots.

This chain is BURP domain-containing protein 11 (BURP11), found in Oryza sativa subsp. japonica (Rice).